The sequence spans 212 residues: Peptide methionine sulfoxide reductase MsrA (212 aa).

C52 is a catalytic residue.

The protein belongs to the MsrA Met sulfoxide reductase family.

The catalysed reaction is L-methionyl-[protein] + [thioredoxin]-disulfide + H2O = L-methionyl-(S)-S-oxide-[protein] + [thioredoxin]-dithiol. It carries out the reaction [thioredoxin]-disulfide + L-methionine + H2O = L-methionine (S)-S-oxide + [thioredoxin]-dithiol. Functionally, has an important function as a repair enzyme for proteins that have been inactivated by oxidation. Catalyzes the reversible oxidation-reduction of methionine sulfoxide in proteins to methionine. The protein is Peptide methionine sulfoxide reductase MsrA of Escherichia coli O6:K15:H31 (strain 536 / UPEC).